Here is a 316-residue protein sequence, read N- to C-terminus: Acetaldehyde dehydrogenase (316 aa).

11 to 14 (SGNI) lines the NAD(+) pocket. Cys-131 functions as the Acyl-thioester intermediate in the catalytic mechanism. NAD(+)-binding positions include 162 to 170 (SAGPGTRAN) and Asn-289.

This sequence belongs to the acetaldehyde dehydrogenase family. As to quaternary structure, interacts with MhpE.

The enzyme catalyses acetaldehyde + NAD(+) + CoA = acetyl-CoA + NADH + H(+). It functions in the pathway aromatic compound metabolism; 3-phenylpropanoate degradation. Its function is as follows. Catalyzes the conversion of acetaldehyde to acetyl-CoA, using NAD(+) and coenzyme A. Is the final enzyme in the meta-cleavage pathway for the degradation of aromatic compounds. This Klebsiella pneumoniae subsp. pneumoniae (strain ATCC 700721 / MGH 78578) protein is Acetaldehyde dehydrogenase.